Reading from the N-terminus, the 159-residue chain is Transcriptional repressor NrdR (159 aa).

A zinc finger lies at 3–34; that stretch reads CPKCGYNKSSVVDSRQAEEGTTIRRRRECEKC. The ATP-cone domain maps to 49–139; that stretch reads LLVIKKDGTR…VYKSFKDVDE (91 aa).

Belongs to the NrdR family. Zn(2+) serves as cofactor.

Negatively regulates transcription of bacterial ribonucleotide reductase nrd genes and operons by binding to NrdR-boxes. The sequence is that of Transcriptional repressor NrdR from Streptococcus agalactiae serotype Ia (strain ATCC 27591 / A909 / CDC SS700).